We begin with the raw amino-acid sequence, 273 residues long: Proteasome subunit beta type-10 (273 aa).

Residue Met-1 is modified to N-acetylmethionine. A propeptide spans 1–39 (MLKPALEPRGGFSFENCQRNASLERVLPGLKVPHARKTG) (removed in mature form). Thr-40 acts as the Nucleophile in catalysis. Ser-230 is modified (phosphoserine).

It belongs to the peptidase T1B family. As to quaternary structure, the 26S proteasome consists of a 20S proteasome core and two 19S regulatory subunits. The 20S proteasome core is composed of 28 subunits that are arranged in four stacked rings, resulting in a barrel-shaped structure. The two end rings are each formed by seven alpha subunits, and the two central rings are each formed by seven beta subunits. The catalytic chamber with the active sites is on the inside of the barrel. Component of the immunoproteasome, where it displaces the equivalent housekeeping subunit PSMB7. Component of the spermatoproteasome, a form of the proteasome specifically found in testis. In terms of assembly, (Microbial infection) Interacts with HIV-1 TAT protein. Post-translationally, autocleaved. The resulting N-terminal Thr residue of the mature subunit is responsible for the nucleophile proteolytic activity.

The protein localises to the cytoplasm. The protein resides in the nucleus. It catalyses the reaction Cleavage of peptide bonds with very broad specificity.. The proteasome is a multicatalytic proteinase complex which is characterized by its ability to cleave peptides with Arg, Phe, Tyr, Leu, and Glu adjacent to the leaving group at neutral or slightly basic pH. The proteasome has an ATP-dependent proteolytic activity. This subunit is involved in antigen processing to generate class I binding peptides. This chain is Proteasome subunit beta type-10 (PSMB10), found in Homo sapiens (Human).